The following is a 314-amino-acid chain: 3'-5' exoribonuclease YhaM (314 aa).

The HD domain maps to 163-279 (HVVSMLDLAK…LHYIDNLDAK (117 aa)).

The protein belongs to the YhaM family.

Shows a 3'-5' exoribonuclease activity. The protein is 3'-5' exoribonuclease YhaM of Bacillus thuringiensis (strain Al Hakam).